The primary structure comprises 100 residues: Urease subunit gamma (100 aa).

It belongs to the urease gamma subunit family. As to quaternary structure, heterotrimer of UreA (gamma), UreB (beta) and UreC (alpha) subunits. Three heterotrimers associate to form the active enzyme.

The protein resides in the cytoplasm. It carries out the reaction urea + 2 H2O + H(+) = hydrogencarbonate + 2 NH4(+). It participates in nitrogen metabolism; urea degradation; CO(2) and NH(3) from urea (urease route): step 1/1. The polypeptide is Urease subunit gamma (Bradyrhizobium diazoefficiens (strain JCM 10833 / BCRC 13528 / IAM 13628 / NBRC 14792 / USDA 110)).